We begin with the raw amino-acid sequence, 253 residues long: Probable transcriptional regulatory protein RBE_0568 (253 aa).

Residues 1–21 (MAGHSKFKNIQHRKGAQDKKR) form a disordered region.

The protein belongs to the TACO1 family.

It localises to the cytoplasm. In Rickettsia bellii (strain RML369-C), this protein is Probable transcriptional regulatory protein RBE_0568.